The chain runs to 643 residues: 1-deoxy-D-xylulose-5-phosphate synthase (643 aa).

Thiamine diphosphate contacts are provided by residues His-78 and 119 to 121 (AHS). Asp-150 contributes to the Mg(2+) binding site. Residues 151–152 (GS), Asn-179, Tyr-288, and Glu-370 each bind thiamine diphosphate. Asn-179 contacts Mg(2+).

This sequence belongs to the transketolase family. DXPS subfamily. As to quaternary structure, homodimer. Mg(2+) serves as cofactor. Thiamine diphosphate is required as a cofactor.

It carries out the reaction D-glyceraldehyde 3-phosphate + pyruvate + H(+) = 1-deoxy-D-xylulose 5-phosphate + CO2. It participates in metabolic intermediate biosynthesis; 1-deoxy-D-xylulose 5-phosphate biosynthesis; 1-deoxy-D-xylulose 5-phosphate from D-glyceraldehyde 3-phosphate and pyruvate: step 1/1. Catalyzes the acyloin condensation reaction between C atoms 2 and 3 of pyruvate and glyceraldehyde 3-phosphate to yield 1-deoxy-D-xylulose-5-phosphate (DXP). The polypeptide is 1-deoxy-D-xylulose-5-phosphate synthase (Brucella abortus (strain S19)).